The primary structure comprises 111 residues: Large ribosomal subunit protein uL24 (111 aa).

The disordered stretch occupies residues 43-62 (TRHKKKDQTTKRAAKQSTGK).

This sequence belongs to the universal ribosomal protein uL24 family. In terms of assembly, part of the 50S ribosomal subunit.

One of two assembly initiator proteins, it binds directly to the 5'-end of the 23S rRNA, where it nucleates assembly of the 50S subunit. In terms of biological role, one of the proteins that surrounds the polypeptide exit tunnel on the outside of the subunit. The polypeptide is Large ribosomal subunit protein uL24 (Mycoplasma pneumoniae (strain ATCC 29342 / M129 / Subtype 1) (Mycoplasmoides pneumoniae)).